Reading from the N-terminus, the 259-residue chain is Insulin-induced gene 1 protein (259 aa).

The Cytoplasmic segment spans residues 1–66; the sequence is MPRLHDHVWS…ARPGSWHHDL (66 aa). The tract at residues 33-57 is disordered; it reads PQGPGAPEPEPAPRGQREGTAGFSA. The chain crosses the membrane as a helical span at residues 67 to 89; sequence VQRSLVLFSFGVVLALVLNLLQI. The Extracellular segment spans residues 90–108; that stretch reads QRNVTLFPDEVIATIFSSA. The chain crosses the membrane as a helical span at residues 109 to 126; it reads WWVPPCCGTAAAVVGLLY. Topologically, residues 127–141 are cytoplasmic; it reads PCIDSHLGEPHKFKR. Glycyl lysine isopeptide (Lys-Gly) (interchain with G-Cter in ubiquitin) cross-links involve residues lysine 138 and lysine 140. A helical transmembrane segment spans residues 142 to 164; sequence EWASVMRCIAVFVGINHASAKLD. Residues 165 to 167 lie on the Extracellular side of the membrane; the sequence is FAN. A helical transmembrane segment spans residues 168 to 186; it reads NVQLSLTLAALSLGLWWTF. The Cytoplasmic portion of the chain corresponds to 187–191; that stretch reads DRSRS. Serine 189 carries the phosphoserine modification. The helical transmembrane segment at 192 to 213 threads the bilayer; that stretch reads GLGLGITIAFLATLITQFLVYN. Over 214 to 227 the chain is Extracellular; sequence GVYQYTSPDFLYIR. Residues 228-245 form a helical membrane-spanning segment; sequence SWLPCIFFSGGVTVGNIG. Over 246-259 the chain is Cytoplasmic; the sequence is RQLAMGVPEKPHSD. Residues 253 to 259 carry the KxHxx motif; that stretch reads PEKPHSD.

This sequence belongs to the INSIG family. Interacts with SCAP; interaction is direct and only takes place in the presence of sterols; it prevents interaction between SCAP and the coat protein complex II (COPII). Associates with the SCAP-SREBP complex (composed of SCAP and SREBF1/SREBP1 or SREBF2/SREBP2); association is mediated via its interaction with SCAP and only takes place in the presence of sterols. Interaction with SCAP is mutually exclusive with PAQR3. Interacts with HMGCR (via its SSD); the interaction, accelerated by sterols, leads to the recruitment of HMGCR to AMFR/gp78 for its ubiquitination by the sterol-mediated ERAD pathway. Interacts with AMFR/gp78 (via its membrane domain); the interaction recruits HMCR at the ER membrane for its ubiquitination and degradation by the sterol-mediated ERAD pathway. Interacts with SOAT2/ACAT2; leading to promote recruitment of AMFR/gp78 and subsequent ubiquitination of SOAT2/ACAT2. Interacts with RNF139. Interacts with RNF145. Post-translationally, phosphorylation at Ser-189 by PCK1 reduces binding to oxysterol, disrupting the interaction between INSIG1 and SCAP, thereby promoting nuclear translocation of SREBP proteins (SREBF1/SREBP1 or SREBF2/SREBP2) and subsequent transcription of downstream lipogenesis-related genes. In terms of processing, ubiquitinated by AMFR/gp78 in response to sterol deprivation, leading to its degradation: when the SCAP-SREBP complex becomes dissociated from INSIG1, INSIG1 is then ubiquitinated and degraded in proteasomes. Although ubiquitination is required for rapid INSIG1 degradation, it is not required for release of the SCAP-SREBP complex. Ubiquitinated by RNF139. As to expression, highly expressed in liver and kidney.

The protein localises to the endoplasmic reticulum membrane. Oxysterol-binding protein that mediates feedback control of cholesterol synthesis by controlling both endoplasmic reticulum to Golgi transport of SCAP and degradation of HMGCR. Acts as a negative regulator of cholesterol biosynthesis by mediating the retention of the SCAP-SREBP complex in the endoplasmic reticulum, thereby blocking the processing of sterol regulatory element-binding proteins (SREBPs) SREBF1/SREBP1 and SREBF2/SREBP2. Binds oxysterol, including 25-hydroxycholesterol, regulating interaction with SCAP and retention of the SCAP-SREBP complex in the endoplasmic reticulum. In presence of oxysterol, interacts with SCAP, retaining the SCAP-SREBP complex in the endoplasmic reticulum, thereby preventing SCAP from escorting SREBF1/SREBP1 and SREBF2/SREBP2 to the Golgi. Sterol deprivation or phosphorylation by PCK1 reduce oxysterol-binding, disrupting the interaction between INSIG1 and SCAP, thereby promoting Golgi transport of the SCAP-SREBP complex, followed by processing and nuclear translocation of SREBF1/SREBP1 and SREBF2/SREBP2. Also regulates cholesterol synthesis by regulating degradation of HMGCR: initiates the sterol-mediated ubiquitin-mediated endoplasmic reticulum-associated degradation (ERAD) of HMGCR via recruitment of the reductase to the ubiquitin ligases AMFR/gp78 and/or RNF139. Also regulates degradation of SOAT2/ACAT2 when the lipid levels are low: initiates the ubiquitin-mediated degradation of SOAT2/ACAT2 via recruitment of the ubiquitin ligases AMFR/gp78. This is Insulin-induced gene 1 protein from Rattus norvegicus (Rat).